A 572-amino-acid polypeptide reads, in one-letter code: MVNTNNHISDELDKNLDEMEFLKANSDFLRGTIEQSLANPITGSITQDDAKLLKFHGSYMQDDRDLRDERRKQKLEPAYSFMIRVRVPGGKATPEQWIAMDDISNQYANHTIKLTTRQAFQFHGILKRNLKQSMKNINHAVLDSIAACGDVNRNTMCNPNPYQSQVHKEINDYATRISNHLLPRTNAYHEIWLDGEKVLDSSEEKEPIYGNTYLPRKFKIGIAVPPSNDIDVYSQDIGLIAIVEQDELIGFNVTIGGGMGMTHGITETYPQLGRLIGFIPKEKVVDVCEKILTIQRDYGNRENRKNARFKYTVDRLGETWVTEELNRRLGWEIKAPRDFEFEHNGDRLGWIEGINNWNFTLFIQNGRVKDTEDYLLKTALREIAEIHTGDFRLSPNQNLVIANVSPEKKEEIQAIIDKYKLTDGKNYTGLRRNSMACVAFPTCGLAMAESERYLPSLITKIEDLLDESGLKEEEITIRMTGCPNGCARPALAEIAFIGKAPGKYNMYLGGSFKGERLNKIYKENIDENEILESLRPLLLRYSKERLDGEHFGDFVIRDGVIAKVHDGRDFHS.

Residues Cys437, Cys443, Cys482, and Cys486 each contribute to the [4Fe-4S] cluster site. Cys486 is a siroheme binding site.

The protein belongs to the nitrite and sulfite reductase 4Fe-4S domain family. Alpha(8)-beta(8). The alpha component is a flavoprotein, the beta component is a hemoprotein. It depends on siroheme as a cofactor. [4Fe-4S] cluster serves as cofactor.

It catalyses the reaction hydrogen sulfide + 3 NADP(+) + 3 H2O = sulfite + 3 NADPH + 4 H(+). Its pathway is sulfur metabolism; hydrogen sulfide biosynthesis; hydrogen sulfide from sulfite (NADPH route): step 1/1. Its function is as follows. Component of the sulfite reductase complex that catalyzes the 6-electron reduction of sulfite to sulfide. This is one of several activities required for the biosynthesis of L-cysteine from sulfate. In Staphylococcus epidermidis (strain ATCC 35984 / DSM 28319 / BCRC 17069 / CCUG 31568 / BM 3577 / RP62A), this protein is Sulfite reductase [NADPH] hemoprotein beta-component.